The chain runs to 523 residues: Melanoma-associated antigen E2 (523 aa).

MAGE domains are found at residues 88-288 and 311-502; these read LEDR…YNKA and MNDK…YREA.

This is Melanoma-associated antigen E2 (MAGEE2) from Homo sapiens (Human).